The primary structure comprises 834 residues: Membrane-associated lipoprotein (834 aa).

Residues 1-25 (MKKNKLTTLALILPITILTPIVIAS) form the signal peptide. C26 carries the N-palmitoyl cysteine lipid modification. A lipid anchor (S-diacylglycerol cysteine) is attached at C26. Residues 143–237 (RLKDTFDFKL…LLEVSGFKSN (95 aa)) form the Lipoprotein-associated type-17 domain.

The protein localises to the cell membrane. This is Membrane-associated lipoprotein from Ureaplasma parvum serovar 3 (strain ATCC 700970).